A 359-amino-acid chain; its full sequence is Salicylate carboxymethyltransferase (359 aa).

Tyrosine 18 lines the S-adenosyl-L-methionine pocket. Residues tyrosine 18, 21 to 25, and glutamine 25 each bind substrate; that span reads NSFIQ. S-adenosyl-L-methionine is bound by residues glycine 59, 59–60, 59–61, asparagine 65, 96–99, aspartate 98, 129–131, and 146–148; these read GC, GCS, LNDL, SFY, and SYS. Substrate is bound by residues 147-151 and tryptophan 151; that span reads YSLMW. Residues asparagine 162, aspartate 248, phenylalanine 250, and asparagine 251 each coordinate Mg(2+). Tyrosine 255 lines the substrate pocket.

This sequence belongs to the methyltransferase superfamily. SABATH family.

It catalyses the reaction salicylate + S-adenosyl-L-methionine = methyl salicylate + S-adenosyl-L-homocysteine. Functionally, catalyzes the methylation of the free carboxyl end of the plant hormone salicylic acid (SA). Converts SA to SA methyl ester (MSA). The volatile compound MSA is hypothesized to act as an airborne signal that triggers defense responses in uninfected plants. MSA is an important chemoattractant for moth pollinated flowering plants. In Clarkia breweri (Fairy fans), this protein is Salicylate carboxymethyltransferase (SAMT).